The chain runs to 222 residues: UPF0758 protein Cag_1513 (222 aa).

Residues 100–222 form the MPN domain; it reads KIMAAGDVFE…WYSFRERGLL (123 aa). 3 residues coordinate Zn(2+): H171, H173, and D184. The short motif at 171–184 is the JAMM motif element; that stretch reads HNHPSGDVNPSNAD.

It belongs to the UPF0758 family.

The sequence is that of UPF0758 protein Cag_1513 from Chlorobium chlorochromatii (strain CaD3).